The following is a 101-amino-acid chain: Small ribosomal subunit protein uS14 (101 aa).

Belongs to the universal ribosomal protein uS14 family. Part of the 30S ribosomal subunit. Contacts proteins S3 and S10.

Binds 16S rRNA, required for the assembly of 30S particles and may also be responsible for determining the conformation of the 16S rRNA at the A site. The chain is Small ribosomal subunit protein uS14 from Polaromonas naphthalenivorans (strain CJ2).